The chain runs to 485 residues: Glutamate--tRNA ligase (485 aa).

A 'HIGH' region motif is present at residues 11 to 21 (PSPTGHLHIGN). The short motif at 252-256 (KLSKR) is the 'KMSKS' region element. Residue Lys255 participates in ATP binding.

It belongs to the class-I aminoacyl-tRNA synthetase family. Glutamate--tRNA ligase type 1 subfamily. Monomer.

The protein resides in the cytoplasm. The enzyme catalyses tRNA(Glu) + L-glutamate + ATP = L-glutamyl-tRNA(Glu) + AMP + diphosphate. Its function is as follows. Catalyzes the attachment of glutamate to tRNA(Glu) in a two-step reaction: glutamate is first activated by ATP to form Glu-AMP and then transferred to the acceptor end of tRNA(Glu). In Bacillus licheniformis (strain ATCC 14580 / DSM 13 / JCM 2505 / CCUG 7422 / NBRC 12200 / NCIMB 9375 / NCTC 10341 / NRRL NRS-1264 / Gibson 46), this protein is Glutamate--tRNA ligase.